The primary structure comprises 293 residues: Cytidine deaminase (293 aa).

CMP/dCMP-type deaminase domains lie at 47–166 (DDRA…FGPA) and 186–293 (VSDD…YQAV). Substrate is bound at residue 88–90 (NME). H101 provides a ligand contact to Zn(2+). E103 acts as the Proton donor in catalysis. Residues C128 and C131 each coordinate Zn(2+).

This sequence belongs to the cytidine and deoxycytidylate deaminase family. In terms of assembly, homodimer. Zn(2+) serves as cofactor.

It catalyses the reaction cytidine + H2O + H(+) = uridine + NH4(+). The enzyme catalyses 2'-deoxycytidine + H2O + H(+) = 2'-deoxyuridine + NH4(+). This enzyme scavenges exogenous and endogenous cytidine and 2'-deoxycytidine for UMP synthesis. This is Cytidine deaminase from Aeromonas hydrophila subsp. hydrophila (strain ATCC 7966 / DSM 30187 / BCRC 13018 / CCUG 14551 / JCM 1027 / KCTC 2358 / NCIMB 9240 / NCTC 8049).